The following is a 512-amino-acid chain: Activin receptor type-2B (512 aa).

A signal peptide spans M1 to A24. Over E25–N137 the chain is Extracellular. Intrachain disulfides connect C29–C59, C49–C77, C84–C103, C90–C102, and C104–C109. N42 and N65 each carry an N-linked (GlcNAc...) asparagine glycan. Residues I138–W158 form a helical membrane-spanning segment. Residues M159 to I512 are Cytoplasmic-facing. The Protein kinase domain maps to L190 to I478. Residues K196–V204 and K217 contribute to the ATP site. D321 functions as the Proton acceptor in the catalytic mechanism.

This sequence belongs to the protein kinase superfamily. TKL Ser/Thr protein kinase family. TGFB receptor subfamily. The cofactor is Mg(2+). It depends on Mn(2+) as a cofactor. In terms of tissue distribution, not expressed in hen anterior pituitary during the ovulatory cycle but expressed in the ovarian follicle.

The protein resides in the membrane. It catalyses the reaction L-threonyl-[receptor-protein] + ATP = O-phospho-L-threonyl-[receptor-protein] + ADP + H(+). The enzyme catalyses L-seryl-[receptor-protein] + ATP = O-phospho-L-seryl-[receptor-protein] + ADP + H(+). On ligand binding, forms a receptor complex consisting of two type II and two type I transmembrane serine/threonine kinases. Type II receptors phosphorylate and activate type I receptors which autophosphorylate, then bind and activate SMAD transcriptional regulators. Receptor for activin A, activin B and inhibin A. May modulate neuropeptide expression in dorsal root ganglia (DRG) neurons and ovarian follicle development. This chain is Activin receptor type-2B (ACVR2B), found in Gallus gallus (Chicken).